The primary structure comprises 200 residues: ATP-dependent Clp protease proteolytic subunit (200 aa).

Ser104 functions as the Nucleophile in the catalytic mechanism. Residue His129 is part of the active site.

It belongs to the peptidase S14 family. In terms of assembly, fourteen ClpP subunits assemble into 2 heptameric rings which stack back to back to give a disk-like structure with a central cavity, resembling the structure of eukaryotic proteasomes.

It is found in the cytoplasm. The catalysed reaction is Hydrolysis of proteins to small peptides in the presence of ATP and magnesium. alpha-casein is the usual test substrate. In the absence of ATP, only oligopeptides shorter than five residues are hydrolyzed (such as succinyl-Leu-Tyr-|-NHMec, and Leu-Tyr-Leu-|-Tyr-Trp, in which cleavage of the -Tyr-|-Leu- and -Tyr-|-Trp bonds also occurs).. Functionally, cleaves peptides in various proteins in a process that requires ATP hydrolysis. Has a chymotrypsin-like activity. Plays a major role in the degradation of misfolded proteins. The polypeptide is ATP-dependent Clp protease proteolytic subunit (Rubrobacter xylanophilus (strain DSM 9941 / JCM 11954 / NBRC 16129 / PRD-1)).